The sequence spans 222 residues: Lipid A 4'-phosphatase (222 aa).

Topologically, residues 1–3 are cytoplasmic; it reads MAR. Residues 4-24 form a helical membrane-spanning segment; sequence FHIILGLVVCFFAWIFFLIFP. At 25-58 the chain is on the periplasmic side; that stretch reads NLDIQFAGHFYNSSAHQFIGGYDGFLGFLHWFAR. The helical transmembrane segment at 59-79 threads the bilayer; that stretch reads FFPIFFSIIVILFLLGSLFID. Residues 80–87 are Cytoplasmic-facing; it reads KFKIKYRK. A helical transmembrane segment spans residues 88–108; that stretch reads AIFFIAVCLWIGPGLVVNYVF. Residues 109–144 are Periplasmic-facing; it reads KDHWGRPRPVMVEQFNGDKIFQPPFVISSQCDKNCS. The helical transmembrane segment at 145-165 threads the bilayer; sequence FVCGDASMGFWLFAFMPLLAT. The Cytoplasmic portion of the chain corresponds to 166 to 169; the sequence is RKKK. Residues 170–190 form a helical membrane-spanning segment; that stretch reads LVAFIAAVVAGGGLGLMRMSQ. Topologically, residues 191-193 are periplasmic; sequence GGH. The helical transmembrane segment at 194 to 214 threads the bilayer; it reads FFSDVVFCGIFVYISTWVVYA. Over 215-222 the chain is Cytoplasmic; sequence LMYRKKEY.

Belongs to the lipid A LpxF 4'-phosphatase family.

The protein resides in the cell inner membrane. Its pathway is bacterial outer membrane biogenesis; LPS lipid A biosynthesis. In terms of biological role, removes the 4'-phosphate moiety from lipid IV(A) (a tetraacylated precursor of lipid A) and from pentaacylated lipid A, but not from hexaacylated lipid A (as is found in E.coli). Does not dephosphorylate phosphatidic acid, phosphatidylglycerophosphate, or the 1-phosphate group of lipid A and lipid A precursors. Its expression in E.coli confers resistance to the cationic antimicrobial peptide (CAMP) polymyxin B. Plays a critical role in the ability of the bacteria to avoid the host's innate immune system, especially the bactericidal action of CAMPs, although whether it is CAMP-sensitivity or increased sensitivity to the immune system is not clear. This Francisella tularensis subsp. novicida (strain U112) protein is Lipid A 4'-phosphatase.